Consider the following 187-residue polypeptide: Cytochrome b-245 chaperone 1 (187 aa).

Residues 20–42 (GIRSWSLLVGILSTGLAAAYYSG) traverse the membrane as a helical segment. The segment at 167–187 (ESPSERSQSSDSEPDGPGGQS) is disordered. Residues serine 168 and serine 170 each carry the phosphoserine modification.

It belongs to the CYBC1 family. Interacts with CYBB; CYBC1 may act as a chaperone stabilizing Cytochrome b-245 heterodimer.

It localises to the endoplasmic reticulum membrane. Functions as a chaperone necessary for a stable expression of the CYBA and CYBB subunits of the cytochrome b-245 heterodimer. Controls the phagocyte respiratory burst and is essential for innate immunity. The sequence is that of Cytochrome b-245 chaperone 1 from Rattus norvegicus (Rat).